Reading from the N-terminus, the 507-residue chain is Photosystem II CP47 reaction center protein (507 aa).

Residues 2 to 16 (GLPWYRVHTVVLNDP) lie on the Cytoplasmic side of the membrane. Residues 17–39 (GRLISVHLMHTALVAGWAGSMAL) traverse the membrane as a helical segment. Residues 40-94 (YELAIFDSSDAVLNPMWRQGMFVLPFMARLGVTSSWNGWSVTGETGLDPGFWSFE) lie on the Lumenal, thylakoid side of the membrane. The helical transmembrane segment at 95-116 (GVAAAHIVLSGLLFLAAVWHWV) threads the bilayer. Over 117 to 134 (FWDLELFVDPRTGESALD) the chain is Cytoplasmic. The helical transmembrane segment at 135–159 (LPKMFGIHLFLSGLLCFGFGAFHLT) threads the bilayer. The Lumenal, thylakoid segment spans residues 160–196 (GVWGPGMWVSDPYGLTGHVQPVAPEWGPAGFNPFNPG). Residues 197–218 (GVVAHHIAAGIVGIIAGLFHLT) form a helical membrane-spanning segment. The Cytoplasmic segment spans residues 219–233 (VRPPERLYKALRMGN). Residues 234–255 (IETVLSSSIAAVFFAAFVVAGT) form a helical membrane-spanning segment. Residues 256–450 (MWYGNATTPI…GVFRTSPRGW (195 aa)) lie on the Lumenal, thylakoid side of the membrane. Residues 451–474 (FTFGHAVFALLFFFGHIWHGSRTL) form a helical membrane-spanning segment. The Cytoplasmic segment spans residues 475–507 (FRDVFAGVDPGLEEQVEFGVFAKVGDLSTRKEA).

It belongs to the PsbB/PsbC family. PsbB subfamily. PSII is composed of 1 copy each of membrane proteins PsbA, PsbB, PsbC, PsbD, PsbE, PsbF, PsbH, PsbI, PsbJ, PsbK, PsbL, PsbM, PsbT, PsbX, Psb30/Ycf12, peripheral proteins PsbO, CyanoQ (PsbQ), PsbU, PsbV and a large number of cofactors. It forms dimeric complexes. Contacts PsbQ. Requires Binds multiple chlorophylls. PSII binds additional chlorophylls, carotenoids and specific lipids. as cofactor.

It localises to the cellular thylakoid membrane. Functionally, one of the components of the core complex of photosystem II (PSII). It binds chlorophyll and helps catalyze the primary light-induced photochemical processes of PSII. PSII is a light-driven water:plastoquinone oxidoreductase, using light energy to abstract electrons from H(2)O, generating O(2) and a proton gradient subsequently used for ATP formation. The sequence is that of Photosystem II CP47 reaction center protein from Synechocystis sp. (strain ATCC 27184 / PCC 6803 / Kazusa).